The primary structure comprises 404 residues: F-box protein At3g57590 (404 aa).

Positions 1–47 constitute an F-box domain; sequence MEPIPNDLILEIFSRLPAKSVIGFRTLSKHWASILRSPVFTELFLTR.

The protein is F-box protein At3g57590 of Arabidopsis thaliana (Mouse-ear cress).